Consider the following 175-residue polypeptide: Nucleoside triphosphate/diphosphate phosphatase (175 aa).

Residue Arg-23 is the Proton donor of the active site. Residues Asn-87, Asp-103, Asp-105, Asp-107, Asp-120, and Glu-123 each contribute to the Mg(2+) site.

It belongs to the Ntdp family. The cofactor is Mg(2+).

It catalyses the reaction a ribonucleoside 5'-triphosphate + H2O = a ribonucleoside 5'-diphosphate + phosphate + H(+). The enzyme catalyses a ribonucleoside 5'-diphosphate + H2O = a ribonucleoside 5'-phosphate + phosphate + H(+). Its function is as follows. Has nucleoside phosphatase activity towards nucleoside triphosphates and nucleoside diphosphates. This Halalkalibacterium halodurans (strain ATCC BAA-125 / DSM 18197 / FERM 7344 / JCM 9153 / C-125) (Bacillus halodurans) protein is Nucleoside triphosphate/diphosphate phosphatase.